The primary structure comprises 184 residues: NADH-quinone oxidoreductase subunit B (184 aa).

Positions 63, 64, 128, and 158 each coordinate [4Fe-4S] cluster.

Belongs to the complex I 20 kDa subunit family. In terms of assembly, NDH-1 is composed of 14 different subunits. Subunits NuoB, C, D, E, F, and G constitute the peripheral sector of the complex. It depends on [4Fe-4S] cluster as a cofactor.

It is found in the cell inner membrane. The catalysed reaction is a quinone + NADH + 5 H(+)(in) = a quinol + NAD(+) + 4 H(+)(out). NDH-1 shuttles electrons from NADH, via FMN and iron-sulfur (Fe-S) centers, to quinones in the respiratory chain. Couples the redox reaction to proton translocation (for every two electrons transferred, four hydrogen ions are translocated across the cytoplasmic membrane), and thus conserves the redox energy in a proton gradient. The sequence is that of NADH-quinone oxidoreductase subunit B from Xylella fastidiosa (strain 9a5c).